The sequence spans 440 residues: (S)-N-methylcoclaurine 3'-hydroxylase-like protein (440 aa).

A helical; Signal-anchor for type II membrane protein membrane pass occupies residues 2–21; the sequence is EIVTVALIAIVFTTFLYLIV. A heme-binding site is contributed by Cys-430.

It belongs to the cytochrome P450 family. Heme is required as a cofactor.

The protein resides in the membrane. Involved in the biosynthesis of benzylisoquinoline alkaloids. Probably involved in papaverine biosynthesis since its transcripts are abundant only in cultivars with substantial papaverine accumulation. May catalyze the 3'-hydroxylation of (S)-coclaurine. The chain is (S)-N-methylcoclaurine 3'-hydroxylase-like protein from Papaver somniferum (Opium poppy).